A 122-amino-acid chain; its full sequence is Small ribosomal subunit protein uS13 (122 aa).

The tract at residues 97–122 (PVRGQRTHTNARTRKGPAKAIAGKKK) is disordered.

This sequence belongs to the universal ribosomal protein uS13 family. In terms of assembly, part of the 30S ribosomal subunit. Forms a loose heterodimer with protein S19. Forms two bridges to the 50S subunit in the 70S ribosome.

In terms of biological role, located at the top of the head of the 30S subunit, it contacts several helices of the 16S rRNA. In the 70S ribosome it contacts the 23S rRNA (bridge B1a) and protein L5 of the 50S subunit (bridge B1b), connecting the 2 subunits; these bridges are implicated in subunit movement. Contacts the tRNAs in the A and P-sites. The polypeptide is Small ribosomal subunit protein uS13 (Bartonella henselae (strain ATCC 49882 / DSM 28221 / CCUG 30454 / Houston 1) (Rochalimaea henselae)).